A 404-amino-acid polypeptide reads, in one-letter code: Argininosuccinate synthase (404 aa).

Residues 10–18 (AYSGGLDTS) and Ala37 contribute to the ATP site. Residues Tyr90 and Ser95 each coordinate L-citrulline. Gly120 lines the ATP pocket. Positions 122, 126, and 127 each coordinate L-aspartate. Asn126 lines the L-citrulline pocket. L-citrulline is bound by residues Arg130, Ser181, Ser190, Glu266, and Tyr278. The interval 173-200 (DKRGESPFSTDANLLHTSSEGKVLEDPW) is disordered. Residues 179–192 (PFSTDANLLHTSSE) are compositionally biased toward polar residues.

Belongs to the argininosuccinate synthase family. Type 1 subfamily. As to quaternary structure, homotetramer.

The protein resides in the cytoplasm. The catalysed reaction is L-citrulline + L-aspartate + ATP = 2-(N(omega)-L-arginino)succinate + AMP + diphosphate + H(+). Its pathway is amino-acid biosynthesis; L-arginine biosynthesis; L-arginine from L-ornithine and carbamoyl phosphate: step 2/3. The sequence is that of Argininosuccinate synthase from Novosphingobium aromaticivorans (strain ATCC 700278 / DSM 12444 / CCUG 56034 / CIP 105152 / NBRC 16084 / F199).